We begin with the raw amino-acid sequence, 314 residues long: Ketimine reductase mu-crystallin (314 aa).

Arginine 47 contacts 3,3',5-triiodo-L-thyronine. Aspartate 82, histidine 92, arginine 119, alanine 144, valine 146, glutamine 147, asparagine 168, arginine 169, threonine 170, asparagine 173, threonine 205, leucine 206, valine 226, and alanine 228 together coordinate NADPH. Glutamate 257 contributes to the 3,3',5-triiodo-L-thyronine binding site. Serine 292 serves as a coordination point for NADPH.

Belongs to the ornithine cyclodeaminase/mu-crystallin family. As to quaternary structure, homodimer. Binds the thyroid hormone triiodothyronine (T3); T3 binding inhibits enzymatic activity. In terms of tissue distribution, expressed in neural tissues, muscle and kidney. Expressed in the inner ear.

Its subcellular location is the cytoplasm. It catalyses the reaction L-pipecolate + NADP(+) = Delta(1)-piperideine-2-carboxylate + NADPH + H(+). The enzyme catalyses L-pipecolate + NAD(+) = Delta(1)-piperideine-2-carboxylate + NADH + H(+). It carries out the reaction L-proline + NADP(+) = 1-pyrroline-2-carboxylate + NADPH + H(+). The catalysed reaction is L-proline + NAD(+) = 1-pyrroline-2-carboxylate + NADH + H(+). It catalyses the reaction (3R)-1,4-thiomorpholine-3-carboxylate + NAD(+) = 3,4-dehydrothiomorpholine-3-carboxylate + NADH + 2 H(+). The enzyme catalyses (3R)-1,4-thiomorpholine-3-carboxylate + NADP(+) = 3,4-dehydrothiomorpholine-3-carboxylate + NADPH + 2 H(+). It carries out the reaction (S)-cystathionine ketimine + NADH + 2 H(+) = (3R,5S)-2,3,5,6,7-pentahydro-1,4-thiazepine-3,5-dicarboxylate + NAD(+). The catalysed reaction is (S)-cystathionine ketimine + NADPH + 2 H(+) = (3R,5S)-2,3,5,6,7-pentahydro-1,4-thiazepine-3,5-dicarboxylate + NADP(+). It catalyses the reaction (R)-lanthionine ketimine + NADPH + 2 H(+) = (3R,5R)-1,4-thiomorpholine-3,5-dicarboxylate + NADP(+). The enzyme catalyses Delta(2)-thiazoline-2-carboxylate + NADPH + 2 H(+) = L-thiazolidine-2-carboxylate + NADP(+). Its activity is regulated as follows. Inhibited by thyroid hormones triiodothyronine (T3) and thyroxine (T4). Its function is as follows. Catalyzes the NAD(P)H-dependent reduction of imine double bonds of a number of cyclic ketimine substrates, including sulfur-containing cyclic ketimines. Under physiological conditions, it efficiently catalyzes delta(1)-piperideine-2-carboxylate (P2C) and delta(1)-pyrroline-2-carboxylate (Pyr2C) reduction, suggesting a central role in lysine and glutamate metabolism. Additional substrates are delta(2)-thiazoline-2-carboxylate (T2C), 3,4-dehydrothiomorpholine-3-carboxylate (AECK), and (R)-lanthionine ketimine (LK) that is reduced at very low rate compared to other substrates. Also catalyzes the NAD(P)H-dependent reduction of (S)-cystathionine ketimine (CysK). In Homo sapiens (Human), this protein is Ketimine reductase mu-crystallin.